Reading from the N-terminus, the 307-residue chain is Aspartate carbamoyltransferase catalytic subunit (307 aa).

The carbamoyl phosphate site is built by R54 and T55. Residue K83 coordinates L-aspartate. Residues R104, H132, and Q135 each coordinate carbamoyl phosphate. L-aspartate-binding residues include R165 and R228. Carbamoyl phosphate contacts are provided by L267 and P268.

The protein belongs to the aspartate/ornithine carbamoyltransferase superfamily. ATCase family. As to quaternary structure, heterododecamer (2C3:3R2) of six catalytic PyrB chains organized as two trimers (C3), and six regulatory PyrI chains organized as three dimers (R2).

It catalyses the reaction carbamoyl phosphate + L-aspartate = N-carbamoyl-L-aspartate + phosphate + H(+). It functions in the pathway pyrimidine metabolism; UMP biosynthesis via de novo pathway; (S)-dihydroorotate from bicarbonate: step 2/3. In terms of biological role, catalyzes the condensation of carbamoyl phosphate and aspartate to form carbamoyl aspartate and inorganic phosphate, the committed step in the de novo pyrimidine nucleotide biosynthesis pathway. This Clostridium perfringens (strain ATCC 13124 / DSM 756 / JCM 1290 / NCIMB 6125 / NCTC 8237 / Type A) protein is Aspartate carbamoyltransferase catalytic subunit.